The following is an 859-amino-acid chain: Outer membrane usher protein AfaC (859 aa).

A signal peptide spans methionine 1–arginine 28.

It belongs to the fimbrial export usher family.

It is found in the cell outer membrane. Functionally, involved in the export and assembly of AFA-III afimbrial adhesin subunits across the outer membrane. This chain is Outer membrane usher protein AfaC (afaC), found in Escherichia coli.